Reading from the N-terminus, the 525-residue chain is Squalene epoxidase 3 (525 aa).

The chain crosses the membrane as a helical span at residues H9–L29. FAD-binding positions include V64–A65, E84–R85, R92, R163, V179, D341, and M354. Helical transmembrane passes span L452–P472 and L477–A497.

This sequence belongs to the squalene monooxygenase family. FAD serves as cofactor. As to expression, expressed in seedlings, leaves, stems, inflorescences and siliques.

The protein localises to the membrane. It carries out the reaction squalene + reduced [NADPH--hemoprotein reductase] + O2 = (S)-2,3-epoxysqualene + oxidized [NADPH--hemoprotein reductase] + H2O + H(+). Its pathway is terpene metabolism; lanosterol biosynthesis; lanosterol from farnesyl diphosphate: step 2/3. Its function is as follows. Catalyzes the stereospecific oxidation of squalene to (S)-2,3-epoxysqualene, and is considered to be a rate-limiting enzyme in steroid biosynthesis. Can produce not only oxidosqualene, but also 2,3:22,23-dioxidosqualene. This Arabidopsis thaliana (Mouse-ear cress) protein is Squalene epoxidase 3 (SQE3).